Consider the following 356-residue polypeptide: Altered inheritance of mitochondria protein 23, mitochondrial (356 aa).

Residues 1–32 (MLKVPLSDVLSQKMLFLKSFRYFHCTKYFSRD) constitute a mitochondrion transit peptide.

Belongs to the AIM23 family.

The protein localises to the mitochondrion. This chain is Altered inheritance of mitochondria protein 23, mitochondrial (AIM23), found in Saccharomyces cerevisiae (strain RM11-1a) (Baker's yeast).